Here is a 285-residue protein sequence, read N- to C-terminus: Tropomyosin-2 (285 aa).

A coiled-coil region spans residues 1–277 (MDAIKKKMQA…KDIGDDLDTA (277 aa)). The segment at 103–133 (EERLATATAKLSEASQAADESERARKVLENR) is disordered. The span at 122–133 (ESERARKVLENR) shows a compositional bias: basic and acidic residues.

It belongs to the tropomyosin family. As to quaternary structure, homodimer.

Functionally, tropomyosin, in association with the troponin complex, plays a central role in the calcium dependent regulation of muscle contraction. In Bombyx mori (Silk moth), this protein is Tropomyosin-2.